Consider the following 697-residue polypeptide: Probable potassium transporter 4 (697 aa).

At 1-29 the chain is on the cytoplasmic side; the sequence is MSSSHTVTVSMDVEAGQKNKDKKGISQDL. Residues 30-50 traverse the membrane as a helical segment; sequence ILAYKTLGVVFGGLVTSPLYV. Over 51-66 the chain is Extracellular; that stretch reads YPSMNLTNPTEEDYLG. Residue Asn-55 is glycosylated (N-linked (GlcNAc...) asparagine). The chain crosses the membrane as a helical span at residues 67-87; that stretch reads IYSIMFWTLTLIGVVKYICIA. The Cytoplasmic portion of the chain corresponds to 88 to 152; it reads LNADDHGEGG…FIESSIIARR (65 aa). A helical transmembrane segment spans residues 153 to 173; it reads LLLLTAILGMCMLIGDGILTP. Residues 174–189 are Extracellular-facing; that stretch reads AISVLSAIDGLRGPFP. A helical transmembrane segment spans residues 190 to 210; that stretch reads SVSKPAVEGLSAAILVGLFLL. Over 211-217 the chain is Cytoplasmic; it reads QKYGTSK. Residues 218–238 traverse the membrane as a helical segment; the sequence is VSFMFSPIMAAWTFATPVIGV. The Extracellular portion of the chain corresponds to 239–271; the sequence is YSIWRYYPGIFKAMSPHYIVRFFMTNQTRGWQL. A glycan (N-linked (GlcNAc...) asparagine) is linked at Asn-264. The helical transmembrane segment at 272-292 threads the bilayer; the sequence is LGGTVLCITGAEAMFADLGHF. Residues 293–300 are Cytoplasmic-facing; it reads SKRSIQIA. A helical membrane pass occupies residues 301-321; that stretch reads FMSSIYPSLVLTYAGQTAYLI. The Extracellular segment spans residues 322–338; it reads NNVDDFSDGFYKFVPRP. The chain crosses the membrane as a helical span at residues 339 to 359; sequence VYWPMFIIATLAAIVASQSLI. Over 360 to 390 the chain is Cytoplasmic; that stretch reads SATFSVIKQSVVLDYFPRVKVVHTSKDKEGE. The helical transmembrane segment at 391–411 threads the bilayer; sequence VYSPETNYMLMLLCVGVILGF. Residues 412–422 are Extracellular-facing; that stretch reads GDGKDIGNAFG. Residues 423 to 443 traverse the membrane as a helical segment; it reads VVVILVMLITTILLTLVMLII. The Cytoplasmic portion of the chain corresponds to 444-447; that stretch reads WGTH. Residues 448-468 form a helical membrane-spanning segment; the sequence is VVLVALYLVPFLLLEATYVSA. Residues 469–475 are Extracellular-facing; it reads VCTKILR. Residues 476–496 form a helical membrane-spanning segment; it reads GGWVPFAVSVALAAVMFGWYY. Residues 497-697 are Cytoplasmic-facing; sequence GRQRKTEYEA…RVEIGMLYKA (201 aa).

This sequence belongs to the HAK/KUP transporter (TC 2.A.72.3) family.

It is found in the membrane. In terms of biological role, high-affinity potassium transporter. This Oryza sativa subsp. japonica (Rice) protein is Probable potassium transporter 4 (HAK4).